A 130-amino-acid polypeptide reads, in one-letter code: Small ribosomal subunit protein uS11 (130 aa).

It belongs to the universal ribosomal protein uS11 family. In terms of assembly, part of the 30S ribosomal subunit. Interacts with proteins S7 and S18. Binds to IF-3.

In terms of biological role, located on the platform of the 30S subunit, it bridges several disparate RNA helices of the 16S rRNA. Forms part of the Shine-Dalgarno cleft in the 70S ribosome. This chain is Small ribosomal subunit protein uS11, found in Thiobacillus denitrificans (strain ATCC 25259 / T1).